The chain runs to 354 residues: MNRGSLCPNPICLPPLEQSISKFLTQSGTFKDGDLRVNKDGIQTVSLSEPGAPPPIEPLDNQLSLADLEVIKVIGKGSSGNVQLVKHKLTQQFFALKVIQLNTEESTCRAISQELRINLSSQCPYLVSCYQSFYHNGLVSIILEFMDGGSLADLLKKVGKVPENMLSAICKRVLRGLCYIHHERRIIHRDLKPSNLLINHRGEVKITDFGVSKILTSTSSLANSFVGTYPYMSPERISGSLYSNKSDIWSLGLVLLECATGKFPYTPPEHKKGWSSVYELVDAIVENPPPCAPSNLFSPEFCSFISQCVQKDPRDRKSAKELLEHKFVKMFEDSDTNLSAYFTDAGSLIPPLAN.

The Protein kinase domain occupies 68-328 (LEVIKVIGKG…AKELLEHKFV (261 aa)). Residues 74–82 (IGKGSSGNV) and K97 each bind ATP. D190 acts as the Proton acceptor in catalysis. T218 bears the Phosphothreonine mark. S224 is modified (phosphoserine). Residue T228 is modified to Phosphothreonine.

Belongs to the protein kinase superfamily. STE Ser/Thr protein kinase family. MAP kinase kinase subfamily. Interacts with MEKK1 and MPK4. May form a ternary complex composed of MEKK1 and MKK1/MKK2 and MPK4. Interacts with P.syringae type III effector HopF2. Interacts with MPK11. Phosphorylation at Thr-218 and Ser-224 by MAP kinase kinase kinases positively regulates kinase activity. In terms of tissue distribution, expressed in roots, stem, flowers and siliques.

The catalysed reaction is L-seryl-[protein] + ATP = O-phospho-L-seryl-[protein] + ADP + H(+). It catalyses the reaction L-threonyl-[protein] + ATP = O-phospho-L-threonyl-[protein] + ADP + H(+). It carries out the reaction L-tyrosyl-[protein] + ATP = O-phospho-L-tyrosyl-[protein] + ADP + H(+). With respect to regulation, activated through serine and threonine phosphorylation in response to wounding, cold, drought, salt stresses, abscisic acid (ABA), hydrogen peroxide, bacterial flagellin and laminarin beta-glucan. Its function is as follows. MEKK1, MKK1/MKK2 and MPK4/MPK6 function in a signaling pathway that modulates the expression of genes responding to biotic and abiotic stresses and also plays an important role in pathogen defense by negatively regulating innate immunity. Activates by phosphorylation the downstream MPK4. Acts redundantly with MKK2. MKK1-MPK6 module mediates abscisic acid (ABA)-dependent CAT1 expression with H(2)O(2) production and response to drought and salt stress. MKK1-MPK6 module is also involved in sugar signaling during the process of seed germination. This Arabidopsis thaliana (Mouse-ear cress) protein is Mitogen-activated protein kinase kinase 1 (MKK1).